Consider the following 385-residue polypeptide: MAIKHLFTSESVSEGHPDKIADQISDAVLDAIFEQDPKARVACETYVKTGMVMVGGEITTSAWVDIEEITRQTVREIGYVHSDMGFDANSCAVLNTIGKQSPDINQGVDKADPKEQGAGDQGIMFGYATNETEVLMPAPITYAHRLMQRQAAVRKNGTLPWLRPDAKSQVTFQYDQGKIVGIDAVVLSTQHSDSISTADLREAVMEEIIKPVLPAEWLSKETKYFINPTGRFVIGGPMGDCGLTGRKIIVDTYGGAARHGGGAFSGKDPSKVDRSAAYAARYVAKNIVAAGMADRCEIQLSYAIGVADPTSIMVETFGTEKVSQEIIIEAVRQFFDLRPYGLQEMLNLLQPIYKKTAAYGHFGREEFPWEATDKAALLRDFAGLK.

His-16 contacts ATP. Asp-18 provides a ligand contact to Mg(2+). Glu-44 lines the K(+) pocket. L-methionine-binding residues include Glu-57 and Gln-100. Residues 100-110 form a flexible loop region; the sequence is QSPDINQGVDK. ATP is bound by residues 165 to 167, 231 to 232, Asp-240, 246 to 247, Ala-263, and Lys-267; these read DAK, RF, and RK. Residue Asp-240 participates in L-methionine binding. Lys-271 contributes to the L-methionine binding site.

Belongs to the AdoMet synthase family. Homotetramer; dimer of dimers. Requires Mg(2+) as cofactor. K(+) is required as a cofactor.

It localises to the cytoplasm. It catalyses the reaction L-methionine + ATP + H2O = S-adenosyl-L-methionine + phosphate + diphosphate. Its pathway is amino-acid biosynthesis; S-adenosyl-L-methionine biosynthesis; S-adenosyl-L-methionine from L-methionine: step 1/1. Functionally, catalyzes the formation of S-adenosylmethionine (AdoMet) from methionine and ATP. The overall synthetic reaction is composed of two sequential steps, AdoMet formation and the subsequent tripolyphosphate hydrolysis which occurs prior to release of AdoMet from the enzyme. In Vibrio cholerae serotype O1 (strain ATCC 39315 / El Tor Inaba N16961), this protein is S-adenosylmethionine synthase.